A 196-amino-acid polypeptide reads, in one-letter code: Agamous-like MADS-box protein AGL70 (196 aa).

The 61-residue stretch at 1–61 (MGRRKVEIKR…GKLYDSASGD (61 aa)) folds into the MADS-box domain. Positions 8–15 (IKRIENKS) match the Nuclear localization signal motif. One can recognise a K-box domain in the interval 80–170 (ALDLAEKIRN…ASQVGKKTFL (91 aa)).

In terms of tissue distribution, mostly expressed in roots, leaves and flowers, and, to a lower extent, in inflorescence, siliques, pollen and shoots.

Its subcellular location is the nucleus. Its function is as follows. Probable transcription factor involved in the negative regulation of flowering time, probably through the photoperiodic and vernalization pathways; more efficient in cv. Landsberg erecta than in cv. Columbia background. Prevents premature flowering. Involved in the modulation of vernalization impact on flowering according to genotype acclimation to altitude. This Arabidopsis thaliana (Mouse-ear cress) protein is Agamous-like MADS-box protein AGL70.